The chain runs to 127 residues: PRA1 family protein C (127 aa).

Helical transmembrane passes span 15–35, 53–73, and 76–96; these read IFIS…LIVA, VIDD…IFLL, and VSRG…VHGM.

Belongs to the PRA1 family.

It localises to the endoplasmic reticulum membrane. Its function is as follows. May be involved in both secretory and endocytic intracellular trafficking in the endosomal/prevacuolar compartments. The polypeptide is PRA1 family protein C (PRA1C) (Arabidopsis thaliana (Mouse-ear cress)).